Reading from the N-terminus, the 280-residue chain is Dehydrogenase/reductase SDR family member 2, mitochondrial (280 aa).

A mitochondrion-targeting transit peptide spans 1–23 (MLSAVARGYQGWFHPCARLSVRM). NAD(+) contacts are provided by Ser46 and Ile48. Lys96 bears the N6-acetyllysine; alternate mark. Lys96 carries the post-translational modification N6-succinyllysine; alternate. Ser172 is a binding site for substrate. Positions 185 and 189 each coordinate NAD(+). Tyr185 functions as the Proton acceptor in the catalytic mechanism. Residue Lys219 is modified to N6-acetyllysine; alternate. Lys219 is subject to N6-succinyllysine; alternate. Residue Thr220 participates in NAD(+) binding. Phosphoserine is present on Ser223. At Lys237 the chain carries N6-succinyllysine.

It belongs to the short-chain dehydrogenases/reductases (SDR) family. As to quaternary structure, directly interacts with MDM2; this interaction occurs in the nucleus and does not target DHRS2 to degradation. As to expression, widely expressed, with highest levels in liver and kidney, followed by heart, spleen, skeletal muscle and placenta. In hemopoietic cells, expressed in dendritic cells, but not in monocytes, macrophages, granulocytes, nor in B and T lymphocytes.

Its subcellular location is the mitochondrion matrix. The protein localises to the nucleus. In terms of biological role, NADPH-dependent oxidoreductase which catalyzes the reduction of dicarbonyl compounds. Displays reductase activity in vitro with 3,4-hexanedione, 2,3-heptanedione and 1-phenyl-1,2-propanedione as substrates. May function as a dicarbonyl reductase in the enzymatic inactivation of reactive carbonyls involved in covalent modification of cellular components. Also displays a minor hydroxysteroid dehydrogenase activity toward bile acids such as ursodeoxycholic acid (UDCA) and isoursodeoxycholic acid (isoUDCA), which makes it unlikely to control hormone levels. Doesn't show any activity in vitro with retinoids and sugars as substrates. Attenuates MDM2-mediated p53/TP53 degradation, leading to p53/TP53 stabilization and increased transcription activity, resulting in the accumulation of MDM2 and CDKN1A/p21. Reduces proliferation, migration and invasion of cancer cells and well as the production of ROS in cancer. The polypeptide is Dehydrogenase/reductase SDR family member 2, mitochondrial (Homo sapiens (Human)).